The primary structure comprises 127 residues: Apolipoprotein C-IV (127 aa).

The N-terminal stretch at 1 to 27 (MSLLRNRLQALPALCLCVLVLACIGAC) is a signal peptide. Asn-63 is a glycosylation site (N-linked (GlcNAc...) asparagine).

This sequence belongs to the apolipoprotein C4 family. As to expression, expressed by the liver and secreted in plasma.

It localises to the secreted. Functionally, may participate in lipoprotein metabolism. In Homo sapiens (Human), this protein is Apolipoprotein C-IV (APOC4).